The chain runs to 856 residues: V-type proton ATPase subunit a (856 aa).

The Cytoplasmic segment spans residues Met-1–Glu-409. Residues Val-410 to Phe-428 form a helical membrane-spanning segment. Topologically, residues Gly-429–Asp-430 are vacuolar. Residues Phe-431–Trp-447 traverse the membrane as a helical segment. Topologically, residues Glu-448 to Ala-460 are cytoplasmic. Residues Met-461–Ser-490 traverse the membrane as a helical segment. Residues Met-491–Ser-544 are Vacuolar-facing. Residues Tyr-545 to Phe-564 form a helical membrane-spanning segment. Residues Ser-565–Phe-582 are Cytoplasmic-facing. Residues Val-583–Lys-603 traverse the membrane as a helical segment. At Trp-604–Ile-648 the chain is on the vacuolar side. A helical membrane pass occupies residues Leu-649 to Leu-668. At Arg-669 to Thr-738 the chain is on the cytoplasmic side. Positions Val-689–Ala-710 are disordered. The segment covering Leu-692–Glu-707 has biased composition (acidic residues). A helical membrane pass occupies residues Ile-739 to Gln-763. The Vacuolar portion of the chain corresponds to Gln-764 to Gly-784. The helical transmembrane segment at Gly-785 to Glu-823 threads the bilayer. At Ser-824–Gly-856 the chain is on the cytoplasmic side.

Belongs to the V-ATPase 116 kDa subunit family. As to quaternary structure, V-ATPase is a heteromultimeric enzyme composed of a peripheral catalytic V1 complex (components A to H) attached to an integral membrane V0 proton pore complex (components: a, c, c', c'', d, e, f and VOA1).

The protein resides in the vacuole membrane. In terms of biological role, subunit of the V0 complex of vacuolar(H+)-ATPase (V-ATPase), a multisubunit enzyme composed of a peripheral complex (V1) that hydrolyzes ATP and a membrane integral complex (V0) that translocates protons. V-ATPase is responsible for acidifying and maintaining the pH of intracellular compartments. This Neurospora crassa (strain ATCC 24698 / 74-OR23-1A / CBS 708.71 / DSM 1257 / FGSC 987) protein is V-type proton ATPase subunit a (vph-1).